The sequence spans 430 residues: 3-phosphoshikimate 1-carboxyvinyltransferase (430 aa).

Residues Lys-20, Ser-21, and Arg-25 each coordinate 3-phosphoshikimate. Lys-20 is a binding site for phosphoenolpyruvate. Phosphoenolpyruvate-binding residues include Gly-90 and Arg-118. Positions 163, 164, 165, 191, 311, and 338 each coordinate 3-phosphoshikimate. Position 165 (Gln-165) interacts with phosphoenolpyruvate. Asp-311 functions as the Proton acceptor in the catalytic mechanism. Positions 342 and 383 each coordinate phosphoenolpyruvate.

The protein belongs to the EPSP synthase family. In terms of assembly, monomer.

The protein localises to the cytoplasm. The enzyme catalyses 3-phosphoshikimate + phosphoenolpyruvate = 5-O-(1-carboxyvinyl)-3-phosphoshikimate + phosphate. It participates in metabolic intermediate biosynthesis; chorismate biosynthesis. In terms of biological role, catalyzes the transfer of the enolpyruvyl moiety of phosphoenolpyruvate (PEP) to the 5-hydroxyl of shikimate-3-phosphate (S3P) to produce enolpyruvyl shikimate-3-phosphate and inorganic phosphate. In Methanosarcina acetivorans (strain ATCC 35395 / DSM 2834 / JCM 12185 / C2A), this protein is 3-phosphoshikimate 1-carboxyvinyltransferase.